The chain runs to 705 residues: 1,4-alpha-glucan branching enzyme GlgB (705 aa).

Residue Asp309 is the Nucleophile of the active site. Glu360 (proton donor) is an active-site residue. Residues 654 to 705 (VQVERAADPRPNEQQRLVAETPAHEGGRSAPADAAESAEQKPDDEQKGGKKA) are disordered. Residues 691–705 (AEQKPDDEQKGGKKA) show a composition bias toward basic and acidic residues.

This sequence belongs to the glycosyl hydrolase 13 family. GlgB subfamily. As to quaternary structure, monomer.

It catalyses the reaction Transfers a segment of a (1-&gt;4)-alpha-D-glucan chain to a primary hydroxy group in a similar glucan chain.. Its pathway is glycan biosynthesis; glycogen biosynthesis. Functionally, catalyzes the formation of the alpha-1,6-glucosidic linkages in glycogen by scission of a 1,4-alpha-linked oligosaccharide from growing alpha-1,4-glucan chains and the subsequent attachment of the oligosaccharide to the alpha-1,6 position. The protein is 1,4-alpha-glucan branching enzyme GlgB of Deinococcus radiodurans (strain ATCC 13939 / DSM 20539 / JCM 16871 / CCUG 27074 / LMG 4051 / NBRC 15346 / NCIMB 9279 / VKM B-1422 / R1).